The primary structure comprises 49 residues: Osteocalcin (49 aa).

In terms of domain architecture, Gla spans 1–47 (YLDHGLGAPAPYVDPLEPKREVCELNPDCDELADQMGFQEAYRRFYG). Pro9 is subject to 4-hydroxyproline. Ca(2+)-binding residues include Glu17, Glu21, Glu24, and Asp30. Residues Glu17, Glu21, and Glu24 each carry the 4-carboxyglutamate modification. Cys23 and Cys29 are joined by a disulfide.

Belongs to the osteocalcin/matrix Gla protein family. Gamma-carboxyglutamic acid residues are formed by vitamin K dependent carboxylation. These residues are essential for the binding of calcium.

The protein localises to the secreted. Its function is as follows. The carboxylated form is one of the main organic components of the bone matrix, which constitutes 1-2% of the total bone protein: it acts as a negative regulator of bone formation and is required to limit bone formation without impairing bone resorption or mineralization. The carboxylated form binds strongly to apatite and calcium. The uncarboxylated form acts as a hormone secreted by osteoblasts, which regulates different cellular processes, such as energy metabolism, male fertility and brain development. Regulates of energy metabolism by acting as a hormone favoring pancreatic beta-cell proliferation, insulin secretion and sensitivity and energy expenditure. Uncarboxylated osteocalcin hormone also promotes testosterone production in the testes: acts as a ligand for G protein-coupled receptor GPRC6A at the surface of Leydig cells, initiating a signaling response that promotes the expression of enzymes required for testosterone synthesis in a CREB-dependent manner. Also acts as a regulator of brain development: osteocalcin hormone crosses the blood-brain barrier and acts as a ligand for GPR158 on neurons, initiating a signaling response that prevents neuronal apoptosis in the hippocampus, favors the synthesis of all monoamine neurotransmitters and inhibits that of gamma-aminobutyric acid (GABA). Osteocalcin also crosses the placenta during pregnancy and maternal osteocalcin is required for fetal brain development. This chain is Osteocalcin, found in Lama guanicoe (Guanaco).